The primary structure comprises 166 residues: SUMO-conjugating enzyme UBC9 (166 aa).

The 154-residue stretch at 4 to 157 (IAAGRLAEER…VKKEAVKYAA (154 aa)) folds into the UBC core domain. Cys93 acts as the Glycyl thioester intermediate in catalysis.

The protein belongs to the ubiquitin-conjugating enzyme family. As to quaternary structure, interacts with brd-1 and rad-51. Interacts with smo-1 and sop-2. Interacts with bet-1 (via BROMO domain 2). Interacts with isoforms 1 and 2 of X-box-binding protein xbp-1.

The protein localises to the nucleus envelope. Its pathway is protein modification; protein sumoylation. Functionally, accepts the ubiquitin-like protein smo-1 from the aos-1-uba-2 E1 complex and catalyzes its covalent attachment to other proteins with the help of an E3 ligase such as gei-17. Required to sumoylate the ETS transcription factor lin-1, Polycomb protein sop-2, and intermediate filament proteins, such as ifb-1. Required for embryonic development, fertility, vulval morphogenesis, inhibition of vulval cell fates, lifespan, and neuromuscular activity. This is SUMO-conjugating enzyme UBC9 from Caenorhabditis elegans.